The primary structure comprises 459 residues: Putrescine aminotransferase (459 aa).

Pyridoxal 5'-phosphate-binding positions include 150 to 151 and Q274; that span reads GT. K300 bears the N6-(pyridoxal phosphate)lysine mark. T332 provides a ligand contact to pyridoxal 5'-phosphate.

It belongs to the class-III pyridoxal-phosphate-dependent aminotransferase family. Putrescine aminotransferase subfamily. Pyridoxal 5'-phosphate is required as a cofactor.

The catalysed reaction is an alkane-alpha,omega-diamine + 2-oxoglutarate = an omega-aminoaldehyde + L-glutamate. It carries out the reaction putrescine + 2-oxoglutarate = 1-pyrroline + L-glutamate + H2O. It catalyses the reaction cadaverine + 2-oxoglutarate = 5-aminopentanal + L-glutamate. The protein operates within amine and polyamine degradation; putrescine degradation; 4-aminobutanal from putrescine (transaminase route): step 1/1. Its function is as follows. Catalyzes the aminotransferase reaction from putrescine to 2-oxoglutarate, leading to glutamate and 4-aminobutanal, which spontaneously cyclizes to form 1-pyrroline. This is the first step in one of two pathways for putrescine degradation, where putrescine is converted into 4-aminobutanoate (gamma-aminobutyrate or GABA) via 4-aminobutanal. Also functions as a cadaverine transaminase in a a L-lysine degradation pathway to succinate that proceeds via cadaverine, glutarate and L-2-hydroxyglutarate. In Klebsiella pneumoniae subsp. pneumoniae (strain ATCC 700721 / MGH 78578), this protein is Putrescine aminotransferase.